The sequence spans 249 residues: Glutathione S-transferase tcpG (249 aa).

The region spanning 20–109 (LYVRKAIPAP…YLCDKHDKDG (90 aa)) is the GST N-terminal domain. The GST C-terminal domain maps to 115–249 (NATERAQVTS…TEEEIELHGR (135 aa)).

The protein belongs to the GST superfamily.

The enzyme catalyses RX + glutathione = an S-substituted glutathione + a halide anion + H(+). It participates in secondary metabolite biosynthesis. In terms of biological role, glutathione S-transferase; part of the gene cluster that mediates the biosynthesis of an unusual class of epipolythiodioxopiperazines (ETPs) lacking the reactive thiol group important for toxicity. Firstly, L-tyrosine is prenylated by tcpD, before undergoing condensation with L-glycine in a reaction catalyzed by the NRPS tcpP leading to the diketopiperazine (DKP) backbone. Afterwards the alpha-carbon of tyrosine is oxidized by the cytochrome P450 tcpC to form a hydroxyl group. However, in contrast other ETP biosynthesis pathways studied so far, tcpC is not able to bishydroxylate the DKP at both alpha-carbon positions, but hydroxylates the alpha-carbon of the tyrosine part and the nitrogen of the glycine part. The next steps involve an alpha,beta-elimination reaction catalyzed by tcpI, a methylation by the methyltransferase tcpN the action of the four enzyme cascade tcpG/K/J/I. Due to a dysfunctional cytochrome P450 monooxygenase tcpC, the pathway leads to the biosynthesis of probable non-toxic metabolites lacking the reactive thiol group. The polypeptide is Glutathione S-transferase tcpG (Claviceps purpurea (strain 20.1) (Ergot fungus)).